We begin with the raw amino-acid sequence, 120 residues long: Small ribosomal subunit protein uS13 (120 aa).

The segment at 96 to 120 (PCRGQRTRTNARTRKGPRKAIAGKK) is disordered.

Belongs to the universal ribosomal protein uS13 family. As to quaternary structure, part of the 30S ribosomal subunit. Forms a loose heterodimer with protein S19. Forms two bridges to the 50S subunit in the 70S ribosome.

Its function is as follows. Located at the top of the head of the 30S subunit, it contacts several helices of the 16S rRNA. In the 70S ribosome it contacts the 23S rRNA (bridge B1a) and protein L5 of the 50S subunit (bridge B1b), connecting the 2 subunits; these bridges are implicated in subunit movement. Contacts the tRNAs in the A and P-sites. In Dechloromonas aromatica (strain RCB), this protein is Small ribosomal subunit protein uS13.